The primary structure comprises 157 residues: Protein Smg homolog (157 aa).

It belongs to the Smg family.

The polypeptide is Protein Smg homolog (Alkalilimnicola ehrlichii (strain ATCC BAA-1101 / DSM 17681 / MLHE-1)).